The chain runs to 362 residues: Peptide chain release factor 1 (362 aa).

Residue Gln235 is modified to N5-methylglutamine.

This sequence belongs to the prokaryotic/mitochondrial release factor family. Post-translationally, methylated by PrmC. Methylation increases the termination efficiency of RF1.

It localises to the cytoplasm. In terms of biological role, peptide chain release factor 1 directs the termination of translation in response to the peptide chain termination codons UAG and UAA. In Acinetobacter baylyi (strain ATCC 33305 / BD413 / ADP1), this protein is Peptide chain release factor 1.